A 426-amino-acid polypeptide reads, in one-letter code: Protein sum2 (426 aa).

The Sm domain occupies 1 to 80 (MTEFIGSRIS…VKDLRIEEPA (80 aa)). Disordered regions lie at residues 79–100 (PATTPSAPPVQPPNDPAIIGSN), 204–305 (GMPS…AKPR), and 348–426 (SCES…ANDQ). A compositionally biased stretch (pro residues) spans 84-93 (SAPPVQPPND). Polar residues predominate over residues 226 to 237 (VSASPSLQSMPP). Low complexity predominate over residues 261-278 (RNSTVTNDRVVNTTVDVS). Over residues 279–298 (QSQTVETSGPSKEVPTTQPD) the composition is skewed to polar residues. The region spanning 296–332 (QPDASAAKPRTEFDFQTANQKFQSMKDDLLKGKNDEE) is the DFDF domain. The short motif at 335-351 (EFYKPKQSFFDNISCES) is the FFD box element. A compositionally biased stretch (basic and acidic residues) spans 350–371 (ESKEKGMEAADRRALRDRERSL). Residues 360–380 (DRRALRDRERSLNMETFGVAG) carry the TFG box motif. The span at 384 to 401 (RGRRGRGRGRGGRGRGRG) shows a compositional bias: basic residues. Residues 405–426 (NQYNQYRNSNGSQPRAQPANDQ) show a composition bias toward polar residues.

In terms of biological role, required for G2/M phase checkpoint control. The chain is Protein sum2 (sum2) from Schizosaccharomyces pombe (strain 972 / ATCC 24843) (Fission yeast).